A 227-amino-acid chain; its full sequence is ATP-dependent dethiobiotin synthetase BioD (227 aa).

13–18 (DIGKTY) contributes to the ATP binding site. Mg(2+) is bound at residue Thr17. Lys38 is an active-site residue. Residue Ser42 coordinates substrate. Residues Asp55, 116–119 (EGSG), and 179–180 (NN) contribute to the ATP site. Mg(2+)-binding residues include Asp55 and Glu116.

Belongs to the dethiobiotin synthetase family. In terms of assembly, homodimer. It depends on Mg(2+) as a cofactor.

Its subcellular location is the cytoplasm. It catalyses the reaction (7R,8S)-7,8-diammoniononanoate + CO2 + ATP = (4R,5S)-dethiobiotin + ADP + phosphate + 3 H(+). It functions in the pathway cofactor biosynthesis; biotin biosynthesis; biotin from 7,8-diaminononanoate: step 1/2. In terms of biological role, catalyzes a mechanistically unusual reaction, the ATP-dependent insertion of CO2 between the N7 and N8 nitrogen atoms of 7,8-diaminopelargonic acid (DAPA, also called 7,8-diammoniononanoate) to form a ureido ring. This Clostridium botulinum (strain Loch Maree / Type A3) protein is ATP-dependent dethiobiotin synthetase BioD.